We begin with the raw amino-acid sequence, 483 residues long: (R)-mandelonitrile beta-glucosyltransferase (483 aa).

The active-site Proton acceptor is the histidine 22. Histidine 22 contributes to the an anthocyanidin binding site. Aspartate 124 (charge relay) is an active-site residue. The UDP-alpha-D-glucose site is built by threonine 146, glutamine 363, histidine 378, tryptophan 381, asparagine 382, serine 383, and glutamate 386. Alanine 401 contacts an anthocyanidin. UDP-alpha-D-glucose-binding residues include glutamate 402 and glutamine 403.

The protein belongs to the UDP-glycosyltransferase family.

The catalysed reaction is (R)-mandelonitrile + UDP-alpha-D-glucose = (R)-prunasin + UDP + H(+). Functionally, involved in the biosynthesis of the cyanogenic glycoside (R)-prunasin, a precursor of (R)-amygdalin, which at high concentrations is associated with intense bitterness in kernels of almond. Stereo-selectively glucosylates (R)-mandelonitrile to produce (R)-prunasin. The protein is (R)-mandelonitrile beta-glucosyltransferase of Prunus dulcis (Almond).